Consider the following 129-residue polypeptide: Follitropin subunit beta (129 aa).

A signal peptide spans Met-1–Cys-18. Disulfide bonds link Cys-21-Cys-69, Cys-35-Cys-84, Cys-38-Cys-122, Cys-46-Cys-100, Cys-50-Cys-102, and Cys-105-Cys-112. 2 N-linked (GlcNAc...) asparagine glycosylation sites follow: Asn-25 and Asn-42.

It belongs to the glycoprotein hormones subunit beta family. Heterodimer. The active follitropin is a heterodimer composed of an alpha chain/CGA shared with other hormones and a unique beta chain/FSHB shown here.

The protein resides in the secreted. Its function is as follows. Together with the alpha chain CGA constitutes follitropin, the follicle-stimulating hormone, and provides its biological specificity to the hormone heterodimer. Binds FSHR, a G protein-coupled receptor, on target cells to activate downstream signaling pathways. Follitropin is involved in follicle development and spermatogenesis in reproductive organs. This chain is Follitropin subunit beta (FSHB), found in Macaca fascicularis (Crab-eating macaque).